A 391-amino-acid polypeptide reads, in one-letter code: Phosphopentomutase (391 aa).

A Mn(2+)-binding site is contributed by D14. The interval I61–T88 is disordered. The segment covering R76–T87 has biased composition (basic and acidic residues). 5 residues coordinate Mn(2+): D286, H291, D327, H328, and H339.

The protein belongs to the phosphopentomutase family. The cofactor is Mn(2+).

The protein localises to the cytoplasm. The enzyme catalyses 2-deoxy-alpha-D-ribose 1-phosphate = 2-deoxy-D-ribose 5-phosphate. The catalysed reaction is alpha-D-ribose 1-phosphate = D-ribose 5-phosphate. The protein operates within carbohydrate degradation; 2-deoxy-D-ribose 1-phosphate degradation; D-glyceraldehyde 3-phosphate and acetaldehyde from 2-deoxy-alpha-D-ribose 1-phosphate: step 1/2. Functionally, isomerase that catalyzes the conversion of deoxy-ribose 1-phosphate (dRib-1-P) and ribose 1-phosphate (Rib-1-P) to deoxy-ribose 5-phosphate (dRib-5-P) and ribose 5-phosphate (Rib-5-P), respectively. The sequence is that of Phosphopentomutase from Anaeromyxobacter dehalogenans (strain 2CP-C).